The sequence spans 258 residues: C1q-related factor (258 aa).

A signal peptide spans 1–16 (MLLVLVVLIPVLVSSG). Positions 39 to 117 (GPGAGARTDG…PGLPGAGGSG (79 aa)) are disordered. Residues 67 to 77 (GPQGKPGRTGK) are compositionally biased toward low complexity. Positions 67-115 (GPQGKPGRTGKPGPPGPPGDPGPPGPVGPPGEKGEPGKPGPPGLPGAGG) constitute a Collagen-like domain. Residues 78–95 (PGPPGPPGDPGPPGPVGP) are compositionally biased toward pro residues. Residues 125-258 (TTVPRVAFYA…TFSGFIIYSD (134 aa)) enclose the C1q domain.

Interacts with ADGRB3. Forms heterooligomers with C1QL4, when proteins are coexpressed; this interaction does not occur after secretion. In terms of tissue distribution, expressed in brainstem.

It localises to the secreted. Functionally, may regulate the number of excitatory synapses that are formed on hippocampus neurons. Has no effect on inhibitory synapses. The sequence is that of C1q-related factor (C1QL1) from Homo sapiens (Human).